Consider the following 176-residue polypeptide: NAD(P)H-quinone oxidoreductase subunit 6, chloroplastic (176 aa).

5 helical membrane passes run 10–30 (ILLVFLGSGLILGGLGVVLFT), 32–52 (PIFSAFSLGLVLVCISLFHIL), 61–81 (AQLLIYVGAVNVLIIFAVMFM), 92–112 (LWTVGDGVTSLVCTSILFSLI), and 152–172 (FYLPFELISIILLVALIGAIA).

Belongs to the complex I subunit 6 family. As to quaternary structure, NDH is composed of at least 16 different subunits, 5 of which are encoded in the nucleus.

The protein localises to the plastid. The protein resides in the chloroplast thylakoid membrane. The enzyme catalyses a plastoquinone + NADH + (n+1) H(+)(in) = a plastoquinol + NAD(+) + n H(+)(out). It catalyses the reaction a plastoquinone + NADPH + (n+1) H(+)(in) = a plastoquinol + NADP(+) + n H(+)(out). NDH shuttles electrons from NAD(P)H:plastoquinone, via FMN and iron-sulfur (Fe-S) centers, to quinones in the photosynthetic chain and possibly in a chloroplast respiratory chain. The immediate electron acceptor for the enzyme in this species is believed to be plastoquinone. Couples the redox reaction to proton translocation, and thus conserves the redox energy in a proton gradient. The chain is NAD(P)H-quinone oxidoreductase subunit 6, chloroplastic (ndhG) from Drimys granadensis.